The chain runs to 130 residues: Large ribosomal subunit protein bL19 (130 aa).

The protein belongs to the bacterial ribosomal protein bL19 family.

Functionally, this protein is located at the 30S-50S ribosomal subunit interface and may play a role in the structure and function of the aminoacyl-tRNA binding site. This chain is Large ribosomal subunit protein bL19, found in Mycoplasma mycoides subsp. mycoides SC (strain CCUG 32753 / NCTC 10114 / PG1).